We begin with the raw amino-acid sequence, 224 residues long: uncharacterized protein (224 aa).

Residues Asn-10, Asn-70, and Asn-74 are each glycosylated (N-linked (GlcNAc...) asparagine).

Its subcellular location is the endoplasmic reticulum. This is an uncharacterized protein from Saccharomyces cerevisiae (strain ATCC 204508 / S288c) (Baker's yeast).